Here is a 123-residue protein sequence, read N- to C-terminus: Holo-[acyl-carrier-protein] synthase (123 aa).

D8 and E50 together coordinate Mg(2+).

It belongs to the P-Pant transferase superfamily. AcpS family. Mg(2+) serves as cofactor.

The protein resides in the cytoplasm. The enzyme catalyses apo-[ACP] + CoA = holo-[ACP] + adenosine 3',5'-bisphosphate + H(+). Its function is as follows. Transfers the 4'-phosphopantetheine moiety from coenzyme A to a Ser of acyl-carrier-protein. The polypeptide is Holo-[acyl-carrier-protein] synthase (Kocuria rhizophila (strain ATCC 9341 / DSM 348 / NBRC 103217 / DC2201)).